Consider the following 278-residue polypeptide: MSLAAPLTAADLWADVLAVRAQSPLVHSITNFVVMNFNANVLLALGAAPVMAHAHDEVADMAGIAQALVLNIGTLEPAWVESMHKARRAARARGIPVVLDPVGAGATAYRNRALSGLLAAGAPTVIRGNGSEVLSVAGLGAPTRGVDSTLSSNDAVAAAQTLSRRIGSVVCVSGADDHVVDALGRWATLSNGHPWMTRITGVGCSATAMIGAFAAVQPDAWRATTAAMAYLGVVGEWAAEQVIAAGNGVGSLQVKLLDGLQLLDDATFRARLKMTVHG.

Met51 provides a ligand contact to substrate. 2 residues coordinate ATP: Arg127 and Ser173. Residue Gly201 participates in substrate binding.

The protein belongs to the Thz kinase family. Mg(2+) serves as cofactor.

The enzyme catalyses 5-(2-hydroxyethyl)-4-methylthiazole + ATP = 4-methyl-5-(2-phosphooxyethyl)-thiazole + ADP + H(+). It functions in the pathway cofactor biosynthesis; thiamine diphosphate biosynthesis; 4-methyl-5-(2-phosphoethyl)-thiazole from 5-(2-hydroxyethyl)-4-methylthiazole: step 1/1. In terms of biological role, catalyzes the phosphorylation of the hydroxyl group of 4-methyl-5-beta-hydroxyethylthiazole (THZ). This is Hydroxyethylthiazole kinase from Leptothrix cholodnii (strain ATCC 51168 / LMG 8142 / SP-6) (Leptothrix discophora (strain SP-6)).